Here is a 907-residue protein sequence, read N- to C-terminus: Protein translocase subunit SecA (907 aa).

ATP is bound by residues Gln87, 105–109 (GEGKT), and Asp513. Over residues 841 to 853 (EAQRRAQAEEAAR) the composition is skewed to basic and acidic residues. The segment at 841–907 (EAQRRAQAEE…KYKQCHGQIN (67 aa)) is disordered. A compositionally biased stretch (low complexity) spans 854–865 (RAQAQHASAQSQ). The segment covering 872 to 887 (EGHHQPVVRDERKVGR) has biased composition (basic and acidic residues). Positions 891, 893, 902, and 903 each coordinate Zn(2+).

Belongs to the SecA family. In terms of assembly, monomer and homodimer. Part of the essential Sec protein translocation apparatus which comprises SecA, SecYEG and auxiliary proteins SecDF-YajC and YidC. Zn(2+) is required as a cofactor.

The protein resides in the cell inner membrane. The protein localises to the cytoplasm. It carries out the reaction ATP + H2O + cellular proteinSide 1 = ADP + phosphate + cellular proteinSide 2.. Functionally, part of the Sec protein translocase complex. Interacts with the SecYEG preprotein conducting channel. Has a central role in coupling the hydrolysis of ATP to the transfer of proteins into and across the cell membrane, serving both as a receptor for the preprotein-SecB complex and as an ATP-driven molecular motor driving the stepwise translocation of polypeptide chains across the membrane. This is Protein translocase subunit SecA from Vibrio vulnificus (strain YJ016).